We begin with the raw amino-acid sequence, 196 residues long: Histone H1.0 (196 aa).

Disordered regions lie at residues 1–29 (MTENSAAAPAGKPKRSKASKKATDHPKYS) and 78–196 (SGTL…GRKK). Positions 24 to 97 (DHPKYSDMIL…GASGSFRLAK (74 aa)) constitute an H15 domain. Residues 104–196 (PAKKPKKEIK…ASPKKSGRKK (93 aa)) show a composition bias toward basic residues.

It belongs to the histone H1/H5 family.

It localises to the nucleus. Its subcellular location is the chromosome. In terms of biological role, histones H1 are necessary for the condensation of nucleosome chains into higher-order structures. The histones H1.0 are found in cells that are in terminal stages of differentiation or that have low rates of cell division. The sequence is that of Histone H1.0 (h1-0) from Xenopus tropicalis (Western clawed frog).